Here is a 60-residue protein sequence, read N- to C-terminus: Putative transcriptional regulator XtpA (60 aa).

Its function is as follows. Controls the expression of small non-coding RNA GcvB, which represses the expression of many amino acid transporter proteins and uptake of aminoglycoside antibiotics in cells. Might be a transcriptional activator. An RNA (xtr) with a tRNA-like fold possibly derived from tRNA-Arg(UCG) is encoded entirely within the protein; xtr does not have the sequence corresponding to tRNA anticodon or variable arms. 10 synonymous codon changes in the xtr region of xtpA have the same phenotype as a deletion mutation, suggesting the mRNA secondary structure is important for function. The chain is Putative transcriptional regulator XtpA from Escherichia coli (strain K12).